Consider the following 371-residue polypeptide: Beta-1,3-galactosyltransferase 4 (371 aa).

Residues methionine 1–serine 4 lie on the Cytoplasmic side of the membrane. A helical; Signal-anchor for type II membrane protein transmembrane segment spans residues leucine 5–proline 25. Residues serine 26 to serine 371 are Lumenal-facing. Residue asparagine 143 is glycosylated (N-linked (GlcNAc...) asparagine). The tract at residues glycine 187 to lysine 208 is disordered. A compositionally biased stretch (basic and acidic residues) spans glutamine 194 to histidine 207.

It belongs to the glycosyltransferase 31 family. In terms of tissue distribution, highly expressed in thymus, spleen, kidney and testis and, to a lesser extent, in brain and liver.

The protein localises to the golgi apparatus membrane. It catalyses the reaction a ganglioside GM2 (d18:1(4E)) + UDP-alpha-D-galactose = a ganglioside GM1 (d18:1(4E)) + UDP + H(+). The enzyme catalyses a ganglioside GM2 + UDP-alpha-D-galactose = a ganglioside GM1 + UDP + H(+). It carries out the reaction a ganglioside GD2 (d18:1(4E)) + UDP-alpha-D-galactose = a ganglioside GD1b (d18:1(4E)) + UDP + H(+). The catalysed reaction is a ganglioside GA2 (d18:1(4E)) + UDP-alpha-D-galactose = a ganglioside GA1 (d18:1(4E)) + UDP + H(+). The protein operates within protein modification; protein glycosylation. Involved in GM1/GD1B/GA1 ganglioside biosynthesis. The protein is Beta-1,3-galactosyltransferase 4 (B3galt4) of Rattus norvegicus (Rat).